Consider the following 336-residue polypeptide: Tetraacyldisaccharide 4'-kinase (336 aa).

60 to 67 contacts ATP; sequence TAGGNGKT.

The protein belongs to the LpxK family.

The enzyme catalyses a lipid A disaccharide + ATP = a lipid IVA + ADP + H(+). It functions in the pathway glycolipid biosynthesis; lipid IV(A) biosynthesis; lipid IV(A) from (3R)-3-hydroxytetradecanoyl-[acyl-carrier-protein] and UDP-N-acetyl-alpha-D-glucosamine: step 6/6. Its function is as follows. Transfers the gamma-phosphate of ATP to the 4'-position of a tetraacyldisaccharide 1-phosphate intermediate (termed DS-1-P) to form tetraacyldisaccharide 1,4'-bis-phosphate (lipid IVA). This chain is Tetraacyldisaccharide 4'-kinase, found in Vibrio cholerae serotype O1 (strain ATCC 39315 / El Tor Inaba N16961).